A 294-amino-acid polypeptide reads, in one-letter code: Undecaprenyl-diphosphatase (294 aa).

A run of 9 helical transmembrane segments spans residues 2-22, 27-47, 65-85, 110-130, 135-155, 172-192, 215-235, 239-259, and 272-292; these read SMIY…SLIL, LVFS…PISS, VIAF…KIFW, LCIR…MIFY, LIFE…FLLV, ITYL…WPGF, FSFF…LYHY, IGLM…FIAL, and VSLI…YWGL.

The protein belongs to the UppP family.

It is found in the cell inner membrane. The enzyme catalyses di-trans,octa-cis-undecaprenyl diphosphate + H2O = di-trans,octa-cis-undecaprenyl phosphate + phosphate + H(+). Its function is as follows. Catalyzes the dephosphorylation of undecaprenyl diphosphate (UPP). Confers resistance to bacitracin. The chain is Undecaprenyl-diphosphatase from Blochmanniella pennsylvanica (strain BPEN).